Here is a 413-residue protein sequence, read N- to C-terminus: GDP-mannose-dependent alpha-mannosyltransferase (413 aa).

The protein belongs to the glycosyltransferase group 1 family.

Its pathway is phospholipid metabolism; phosphatidylinositol metabolism. Its function is as follows. Catalyzes the addition of a mannose residue from GDP-D-mannose to GlcAGroAc2 to generate 1,2-di-O-C16/C18:1-(alpha-D-mannopyranosyl)-(1-4)-(alpha-D-glucopyranosyluronic acid)-(1-3)-glycerol(ManGlcAGroAc2). The sequence is that of GDP-mannose-dependent alpha-mannosyltransferase (mgtA) from Corynebacterium glutamicum (strain ATCC 13032 / DSM 20300 / JCM 1318 / BCRC 11384 / CCUG 27702 / LMG 3730 / NBRC 12168 / NCIMB 10025 / NRRL B-2784 / 534).